A 300-amino-acid polypeptide reads, in one-letter code: 4-hydroxy-tetrahydrodipicolinate synthase (300 aa).

Pyruvate is bound at residue threonine 46. Catalysis depends on tyrosine 134, which acts as the Proton donor/acceptor. The Schiff-base intermediate with substrate role is filled by lysine 162. Valine 204 is a pyruvate binding site.

This sequence belongs to the DapA family. In terms of assembly, homotetramer; dimer of dimers.

It is found in the cytoplasm. It catalyses the reaction L-aspartate 4-semialdehyde + pyruvate = (2S,4S)-4-hydroxy-2,3,4,5-tetrahydrodipicolinate + H2O + H(+). It functions in the pathway amino-acid biosynthesis; L-lysine biosynthesis via DAP pathway; (S)-tetrahydrodipicolinate from L-aspartate: step 3/4. Catalyzes the condensation of (S)-aspartate-beta-semialdehyde [(S)-ASA] and pyruvate to 4-hydroxy-tetrahydrodipicolinate (HTPA). This Heliobacterium modesticaldum (strain ATCC 51547 / Ice1) protein is 4-hydroxy-tetrahydrodipicolinate synthase.